Reading from the N-terminus, the 96-residue chain is MMKRVHVYVKGKVQGVFFRAHTRKAALRFHVNGWVRNLPNGRVEAVFEGRSPEVNALIDWCRQGPSHAIVEHLDVCEETYTGEFDDFRILYDERAS.

The Acylphosphatase-like domain maps to 4 to 91 (RVHVYVKGKV…GEFDDFRILY (88 aa)). Residues Arg19 and Asn37 contribute to the active site.

Belongs to the acylphosphatase family.

It catalyses the reaction an acyl phosphate + H2O = a carboxylate + phosphate + H(+). This Syntrophus aciditrophicus (strain SB) protein is Acylphosphatase (acyP).